Consider the following 1379-residue polypeptide: DNA-directed RNA polymerase subunit beta'' (1379 aa).

Positions 224, 295, 302, and 305 each coordinate Zn(2+). The disordered stretch occupies residues 503 to 524 (SVQSLSVKRRSTSKLSETNDEA).

This sequence belongs to the RNA polymerase beta' chain family. RpoC2 subfamily. As to quaternary structure, in plastids the minimal PEP RNA polymerase catalytic core is composed of four subunits: alpha, beta, beta', and beta''. When a (nuclear-encoded) sigma factor is associated with the core the holoenzyme is formed, which can initiate transcription. It depends on Zn(2+) as a cofactor.

It is found in the plastid. The catalysed reaction is RNA(n) + a ribonucleoside 5'-triphosphate = RNA(n+1) + diphosphate. Functionally, DNA-dependent RNA polymerase catalyzes the transcription of DNA into RNA using the four ribonucleoside triphosphates as substrates. The polypeptide is DNA-directed RNA polymerase subunit beta'' (Cuscuta exaltata (Tall dodder)).